The sequence spans 1164 residues: Hamartin (1164 aa).

K30 participates in a covalent cross-link: Glycyl lysine isopeptide (Lys-Gly) (interchain with G-Cter in ubiquitin). The tract at residues 403–787 (SDDYVHISLP…QIRQLQHDRE (385 aa)) is mediates interaction with WDR45B. The disordered stretch occupies residues 439-571 (LNDRGSEEPP…ADESPAGDRE (133 aa)). A compositionally biased stretch (basic and acidic residues) spans 474-487 (EKDKEEAAISRELS). S487, S505, S511, S521, and S598 each carry phosphoserine. Positions 513-530 (PGSQRKTHSAASSSQGAS) are enriched in polar residues. Residues 721–997 (RKVIKAAALE…AAEERLDCCN (277 aa)) are a coiled coil. Residues 1006–1085 (GHNEEASGHN…TTVGSLPSSK (80 aa)) are disordered. Positions 1007–1020 (HNEEASGHNGETKT) are enriched in basic and acidic residues. Over residues 1073-1085 (SIPTTVGSLPSSK) the composition is skewed to polar residues. At S1100 the chain carries Phosphoserine. The tract at residues 1131–1164 (IPLNLDGPHPSPPTPDSVGQLHIMDYNETHHEHS) is disordered. The segment covering 1155 to 1164 (DYNETHHEHS) has biased composition (basic and acidic residues).

Component of the TSC-TBC complex (also named Rhebulator complex), composed of 2 molecules of TSC1, 2 molecules of TSC2 and 1 molecule of TBC1D7. Probably forms a complex composed of chaperones HSP90 and HSP70, co-chaperones STIP1/HOP, CDC37, PPP5C, PTGES3/p23, TSC1 and client protein TSC2. Forms a complex composed of chaperones HSP90 and HSP70, co-chaperones CDC37, PPP5C, TSC1 and client protein TSC2, CDK4, AKT, RAF1 and NR3C1; this complex does not contain co-chaperones STIP1/HOP and PTGES3/p23. Forms a complex containing HSP90AA1, TSC1 and TSC2; TSC1 is required to recruit TCS2 to the complex. Interacts (via C-terminus) with the closed form of HSP90AA1 (via the middle domain and TPR repeat-binding motif). Interacts with DOCK7. Interacts with FBXW5. Interacts with WDR45B. Interacts with RPAP3 and URI1. In terms of processing, phosphorylation at Ser-505 does not affect interaction with TSC2. 'Lys-63'-linked ubiquitinated at Lys-30 by PELI1; the ubiquitination promotes TSC1/TSC2 complex stability. Highly expressed in skeletal muscle, followed by heart, brain, placenta, pancreas, lung, liver and kidney. Also expressed in embryonic kidney cells.

The protein localises to the lysosome membrane. Its subcellular location is the cytoplasm. The protein resides in the cytosol. Its function is as follows. Non-catalytic component of the TSC-TBC complex, a multiprotein complex that acts as a negative regulator of the canonical mTORC1 complex, an evolutionarily conserved central nutrient sensor that stimulates anabolic reactions and macromolecule biosynthesis to promote cellular biomass generation and growth. The TSC-TBC complex acts as a GTPase-activating protein (GAP) for the small GTPase RHEB, a direct activator of the protein kinase activity of mTORC1. In absence of nutrients, the TSC-TBC complex inhibits mTORC1, thereby preventing phosphorylation of ribosomal protein S6 kinase (RPS6KB1 and RPS6KB2) and EIF4EBP1 (4E-BP1) by the mTORC1 signaling. The TSC-TBC complex is inactivated in response to nutrients, relieving inhibition of mTORC1. Within the TSC-TBC complex, TSC1 stabilizes TSC2 and prevents TSC2 self-aggregation. Acts as a tumor suppressor. Involved in microtubule-mediated protein transport via its ability to regulate mTORC1 signaling. Also acts as a co-chaperone for HSP90AA1 facilitating HSP90AA1 chaperoning of protein clients such as kinases, TSC2 and glucocorticoid receptor NR3C1. Increases ATP binding to HSP90AA1 and inhibits HSP90AA1 ATPase activity. Competes with the activating co-chaperone AHSA1 for binding to HSP90AA1, thereby providing a reciprocal regulatory mechanism for chaperoning of client proteins. Recruits TSC2 to HSP90AA1 and stabilizes TSC2 by preventing the interaction between TSC2 and ubiquitin ligase HERC1. In Homo sapiens (Human), this protein is Hamartin.